We begin with the raw amino-acid sequence, 138 residues long: Putative pre-16S rRNA nuclease (138 aa).

This sequence belongs to the YqgF nuclease family.

It localises to the cytoplasm. Its function is as follows. Could be a nuclease involved in processing of the 5'-end of pre-16S rRNA. In Clostridium beijerinckii (strain ATCC 51743 / NCIMB 8052) (Clostridium acetobutylicum), this protein is Putative pre-16S rRNA nuclease.